Here is a 170-residue protein sequence, read N- to C-terminus: Urease accessory protein UreE (170 aa).

The protein belongs to the UreE family.

Its subcellular location is the cytoplasm. Involved in urease metallocenter assembly. Binds nickel. Probably functions as a nickel donor during metallocenter assembly. This Helicobacter pylori (strain P12) protein is Urease accessory protein UreE.